The chain runs to 273 residues: Shikimate dehydrogenase (NADP(+)) (273 aa).

Residues S14–S16 and T59 each bind shikimate. K63 functions as the Proton acceptor in the catalytic mechanism. The shikimate site is built by N84 and D99. Residues G122–A126 and M212 each bind NADP(+). Position 214 (Y214) interacts with shikimate. G235 lines the NADP(+) pocket.

Belongs to the shikimate dehydrogenase family. In terms of assembly, homodimer.

The enzyme catalyses shikimate + NADP(+) = 3-dehydroshikimate + NADPH + H(+). It participates in metabolic intermediate biosynthesis; chorismate biosynthesis; chorismate from D-erythrose 4-phosphate and phosphoenolpyruvate: step 4/7. In terms of biological role, involved in the biosynthesis of the chorismate, which leads to the biosynthesis of aromatic amino acids. Catalyzes the reversible NADPH linked reduction of 3-dehydroshikimate (DHSA) to yield shikimate (SA). The polypeptide is Shikimate dehydrogenase (NADP(+)) (Aeropyrum pernix (strain ATCC 700893 / DSM 11879 / JCM 9820 / NBRC 100138 / K1)).